The chain runs to 236 residues: LexA repressor (236 aa).

Positions 26–46 (FDEMKDALDLRSKSGIHRLIT) form a DNA-binding region, H-T-H motif. The disordered stretch occupies residues 85–109 (PSVIEGNLGKVRPPSPTPAEDDHDR). Catalysis depends on for autocatalytic cleavage activity residues Ser157 and Lys195.

This sequence belongs to the peptidase S24 family. As to quaternary structure, homodimer.

It catalyses the reaction Hydrolysis of Ala-|-Gly bond in repressor LexA.. In terms of biological role, represses a number of genes involved in the response to DNA damage (SOS response), including recA and lexA. In the presence of single-stranded DNA, RecA interacts with LexA causing an autocatalytic cleavage which disrupts the DNA-binding part of LexA, leading to derepression of the SOS regulon and eventually DNA repair. This chain is LexA repressor, found in Rhodopseudomonas palustris (strain ATCC BAA-98 / CGA009).